We begin with the raw amino-acid sequence, 154 residues long: Ribosome maturation factor RimP (154 aa).

The protein belongs to the RimP family.

The protein resides in the cytoplasm. Its function is as follows. Required for maturation of 30S ribosomal subunits. The protein is Ribosome maturation factor RimP of Ruthia magnifica subsp. Calyptogena magnifica.